The primary structure comprises 206 residues: MAEEAYEYLVPLEKYLSAGVRLGTRLSNRYLEERGFIFAVRPDGLRIFDIKKIDERLKIAAKFIARYPPDRVLVHTTRPYGFKPVQMFCKFVGCRALTGRFIPGTLTNPNLPHYQEVDLLFVVDPKLDAQAVTEAAKMGIPVVALVDTDTPHQYIDLMVPCNNKGRKSLALIFWILARQILRERGELKPDQDLPVPPEEFETRLVQ.

It belongs to the universal ribosomal protein uS2 family.

The polypeptide is Small ribosomal subunit protein uS2 (Pyrobaculum neutrophilum (strain DSM 2338 / JCM 9278 / NBRC 100436 / V24Sta) (Thermoproteus neutrophilus)).